The chain runs to 261 residues: DNA repair protein RecO (261 aa).

It belongs to the RecO family.

Its function is as follows. Involved in DNA repair and RecF pathway recombination. The protein is DNA repair protein RecO of Chlorobium limicola (strain DSM 245 / NBRC 103803 / 6330).